The following is a 422-amino-acid chain: UDP-N-acetylglucosamine 1-carboxyvinyltransferase (422 aa).

Residue 22 to 23 (KN) participates in phosphoenolpyruvate binding. Arg94 contributes to the UDP-N-acetyl-alpha-D-glucosamine binding site. Catalysis depends on Cys118, which acts as the Proton donor. Cys118 is modified (2-(S-cysteinyl)pyruvic acid O-phosphothioketal). Residues 123-127 (RPVDL), Asp309, and Ile331 contribute to the UDP-N-acetyl-alpha-D-glucosamine site.

The protein belongs to the EPSP synthase family. MurA subfamily.

The protein localises to the cytoplasm. The enzyme catalyses phosphoenolpyruvate + UDP-N-acetyl-alpha-D-glucosamine = UDP-N-acetyl-3-O-(1-carboxyvinyl)-alpha-D-glucosamine + phosphate. Its pathway is cell wall biogenesis; peptidoglycan biosynthesis. Cell wall formation. Adds enolpyruvyl to UDP-N-acetylglucosamine. In Cereibacter sphaeroides (strain KD131 / KCTC 12085) (Rhodobacter sphaeroides), this protein is UDP-N-acetylglucosamine 1-carboxyvinyltransferase.